Reading from the N-terminus, the 416-residue chain is RNA polymerase sigma-C factor (416 aa).

The Polymerase core binding motif lies at 205–218 (DLVQEGTLGLERAV). The segment at residues 374 to 393 (LAEIGRALDLSRERVRQIES) is a DNA-binding region (H-T-H motif).

The protein belongs to the sigma-70 factor family.

Sigma factors are initiation factors that promote the attachment of RNA polymerase to specific initiation sites and are then released. This is RNA polymerase sigma-C factor (sigC) from Nostoc sp. (strain PCC 7120 / SAG 25.82 / UTEX 2576).